The primary structure comprises 266 residues: Heat-inducible transcription repressor HrcA (266 aa).

Belongs to the HrcA family.

Its function is as follows. Negative regulator of class I heat shock genes (grpE-dnaK-dnaJ and groELS operons). Prevents heat-shock induction of these operons. The polypeptide is Heat-inducible transcription repressor HrcA (Helicobacter pylori (strain ATCC 700392 / 26695) (Campylobacter pylori)).